Here is a 234-residue protein sequence, read N- to C-terminus: uncharacterized protein (234 aa).

Residues 103–211 (LAKKVPFVVC…SHIKIGKSFL (109 aa)) enclose the tRNA-binding domain.

This is an uncharacterized protein from Mycoplasma pneumoniae (strain ATCC 29342 / M129 / Subtype 1) (Mycoplasmoides pneumoniae).